We begin with the raw amino-acid sequence, 365 residues long: tRNA-specific 2-thiouridylase MnmA (365 aa).

Residues 14–21 (AMSGGVDS) and L40 each bind ATP. C108 (nucleophile) is an active-site residue. A disulfide bridge links C108 with C204. G132 lines the ATP pocket. An interaction with tRNA region spans residues 154-156 (KDQ). C204 functions as the Cysteine persulfide intermediate in the catalytic mechanism.

Belongs to the MnmA/TRMU family.

It is found in the cytoplasm. The catalysed reaction is S-sulfanyl-L-cysteinyl-[protein] + uridine(34) in tRNA + AH2 + ATP = 2-thiouridine(34) in tRNA + L-cysteinyl-[protein] + A + AMP + diphosphate + H(+). Its function is as follows. Catalyzes the 2-thiolation of uridine at the wobble position (U34) of tRNA, leading to the formation of s(2)U34. This chain is tRNA-specific 2-thiouridylase MnmA, found in Rickettsia akari (strain Hartford).